We begin with the raw amino-acid sequence, 243 residues long: BTB/POZ domain-containing protein At4g08455 (243 aa).

Positions 19 to 51 form a coiled coil; the sequence is KECYVEAGETEEELKREIDDLKAKVAFLRLSSS. The 73-residue stretch at 64–136 folds into the BTB domain; it reads TDVVLIASED…LYTAEACLDE (73 aa).

In terms of assembly, interacts with CUL3A and CUL3B.

The protein operates within protein modification; protein ubiquitination. In terms of biological role, may act as a substrate-specific adapter of an E3 ubiquitin-protein ligase complex (CUL3-RBX1-BTB) which mediates the ubiquitination and subsequent proteasomal degradation of target proteins. This Arabidopsis thaliana (Mouse-ear cress) protein is BTB/POZ domain-containing protein At4g08455.